The chain runs to 164 residues: S-ribosylhomocysteine lyase (164 aa).

Fe cation is bound by residues H54, H58, and C128.

The protein belongs to the LuxS family. Homodimer. The cofactor is Fe cation.

The enzyme catalyses S-(5-deoxy-D-ribos-5-yl)-L-homocysteine = (S)-4,5-dihydroxypentane-2,3-dione + L-homocysteine. Its function is as follows. Involved in the synthesis of autoinducer 2 (AI-2) which is secreted by bacteria and is used to communicate both the cell density and the metabolic potential of the environment. The regulation of gene expression in response to changes in cell density is called quorum sensing. Catalyzes the transformation of S-ribosylhomocysteine (RHC) to homocysteine (HC) and 4,5-dihydroxy-2,3-pentadione (DPD). This Campylobacter jejuni subsp. jejuni serotype O:2 (strain ATCC 700819 / NCTC 11168) protein is S-ribosylhomocysteine lyase.